We begin with the raw amino-acid sequence, 236 residues long: Purine nucleoside phosphorylase DeoD-type (236 aa).

Histidine 5 provides a ligand contact to a purine D-ribonucleoside. Phosphate contacts are provided by residues glycine 21, arginine 25, arginine 44, and 88–91; that span reads RVGS. A purine D-ribonucleoside-binding positions include 180-182 and 204-205; these read EME and SD. Aspartate 205 acts as the Proton donor in catalysis.

It belongs to the PNP/UDP phosphorylase family. In terms of assembly, homohexamer; trimer of homodimers.

The catalysed reaction is a purine D-ribonucleoside + phosphate = a purine nucleobase + alpha-D-ribose 1-phosphate. The enzyme catalyses a purine 2'-deoxy-D-ribonucleoside + phosphate = a purine nucleobase + 2-deoxy-alpha-D-ribose 1-phosphate. In terms of biological role, catalyzes the reversible phosphorolytic breakdown of the N-glycosidic bond in the beta-(deoxy)ribonucleoside molecules, with the formation of the corresponding free purine bases and pentose-1-phosphate. The chain is Purine nucleoside phosphorylase DeoD-type from Psychromonas ingrahamii (strain DSM 17664 / CCUG 51855 / 37).